The sequence spans 510 residues: Bifunctional pantoate ligase/cytidylate kinase (510 aa).

Residues 1–276 (MKKVIIRKTE…CGETRLIDHV (276 aa)) form a pantoate--beta-alanine ligase region. 29-36 (MGNLHNGH) serves as a coordination point for ATP. Histidine 36 acts as the Proton donor in catalysis. Position 61 (glutamine 61) interacts with (R)-pantoate. Glutamine 61 is a beta-alanine binding site. 150-153 (GEKD) serves as a coordination point for ATP. Glutamine 156 lines the (R)-pantoate pocket. Residue 187-190 (LSSR) participates in ATP binding. Residues 277–510 (FLMKRRPIIA…DKIPKETEIK (234 aa)) are cytidylate kinase.

The protein in the N-terminal section; belongs to the pantothenate synthetase family. In the C-terminal section; belongs to the cytidylate kinase family. Type 1 subfamily.

It localises to the cytoplasm. It carries out the reaction (R)-pantoate + beta-alanine + ATP = (R)-pantothenate + AMP + diphosphate + H(+). The catalysed reaction is CMP + ATP = CDP + ADP. It catalyses the reaction dCMP + ATP = dCDP + ADP. Its pathway is cofactor biosynthesis; (R)-pantothenate biosynthesis; (R)-pantothenate from (R)-pantoate and beta-alanine: step 1/1. In terms of biological role, catalyzes the condensation of pantoate with beta-alanine in an ATP-dependent reaction via a pantoyl-adenylate intermediate. Functionally, catalyzes the transfer of a phosphate group from ATP to either CMP or dCMP to form CDP or dCDP and ADP, respectively. The protein is Bifunctional pantoate ligase/cytidylate kinase of Prochlorococcus marinus (strain MIT 9215).